The sequence spans 1074 residues: Transmembrane protein 132E (1074 aa).

Residues 1–23 (MAPGMSGRRGAALLCLSVLLAHA) form the signal peptide. The Extracellular portion of the chain corresponds to 26-894 (RSHPASPSPP…LTDLEIGMYA (869 aa)). N-linked (GlcNAc...) asparagine glycosylation is found at Asn-70 and Asn-91. 2 disordered regions span residues 205 to 224 (PAAP…PEAA) and 243 to 266 (GGCG…ESPT). Low complexity predominate over residues 247-262 (SARRGPGPGPGAAARA). N-linked (GlcNAc...) asparagine glycosylation is found at Asn-320 and Asn-401. 2 disordered regions span residues 564–587 (RRSA…ANRG) and 816–867 (GRDE…PVPP). The span at 843-854 (GAGPPGTAIPAG) shows a compositional bias: low complexity. A helical transmembrane segment spans residues 895–915 (LLGVFCLAILVFLINCIVFVL). Over 916 to 1074 (RYRHKRIPPE…NYMRRIKDIA (159 aa)) the chain is Cytoplasmic. The interval 962-1064 (VPACCHGDHH…TRPTPPPDLH (103 aa)) is disordered. Composition is skewed to low complexity over residues 973-985 (SGSS…SQVH) and 1016-1026 (FTTFTTLPTEE). The span at 1035–1044 (GEEEDEEEDL) shows a compositional bias: acidic residues.

This sequence belongs to the TMEM132 family. In terms of tissue distribution, widely expressed, with highest levels in the cochlea. In the cochlea, detected in spiral ganglion, the organ of Corti and stria vascularis. In the organ of Corti, prominently expressed in the outer and inner hair cells, especially at the apical and basal region of the outer hair cell body (at protein level).

Its subcellular location is the membrane. Required for normal inner ear hair cell function and hearing. This chain is Transmembrane protein 132E (Tmem132e), found in Mus musculus (Mouse).